Reading from the N-terminus, the 356-residue chain is tRNA N6-adenosine threonylcarbamoyltransferase (356 aa).

His-110 and His-114 together coordinate Fe cation. Substrate-binding positions include 132-136, Asp-165, Gly-178, Asp-182, and Asn-288; that span reads LVSGG. Residue Asp-316 coordinates Fe cation.

It belongs to the KAE1 / TsaD family. Fe(2+) serves as cofactor.

The protein localises to the cytoplasm. It carries out the reaction L-threonylcarbamoyladenylate + adenosine(37) in tRNA = N(6)-L-threonylcarbamoyladenosine(37) in tRNA + AMP + H(+). In terms of biological role, required for the formation of a threonylcarbamoyl group on adenosine at position 37 (t(6)A37) in tRNAs that read codons beginning with adenine. Is involved in the transfer of the threonylcarbamoyl moiety of threonylcarbamoyl-AMP (TC-AMP) to the N6 group of A37, together with TsaE and TsaB. TsaD likely plays a direct catalytic role in this reaction. The chain is tRNA N6-adenosine threonylcarbamoyltransferase from Maridesulfovibrio salexigens (strain ATCC 14822 / DSM 2638 / NCIMB 8403 / VKM B-1763) (Desulfovibrio salexigens).